Consider the following 63-residue polypeptide: Large ribosomal subunit protein uL29 (63 aa).

The protein belongs to the universal ribosomal protein uL29 family.

The protein is Large ribosomal subunit protein uL29 of Alcanivorax borkumensis (strain ATCC 700651 / DSM 11573 / NCIMB 13689 / SK2).